The primary structure comprises 438 residues: tRNA-dihydrouridine(16/17) synthase [NAD(P)(+)]-like (438 aa).

Residues 23–25 (PMV) and Gln79 each bind FMN. The active-site Proton donor is the Cys108. Residues Lys147, His175, 208-210 (NGN), and 232-233 (AE) contribute to the FMN site. Positions 343-387 (GPKEGSKENSSGRSKRALEEEEGSMEGLSKNKLKKQLRNPHKTFD) are disordered. Over residues 373–383 (NKLKKQLRNPH) the composition is skewed to basic residues.

This sequence belongs to the Dus family. Dus1 subfamily. The cofactor is FMN.

The protein localises to the cytoplasm. It is found in the nucleus. It catalyses the reaction 5,6-dihydrouridine(16) in tRNA + NADP(+) = uridine(16) in tRNA + NADPH + H(+). It carries out the reaction 5,6-dihydrouridine(16) in tRNA + NAD(+) = uridine(16) in tRNA + NADH + H(+). The catalysed reaction is 5,6-dihydrouridine(17) in tRNA + NAD(+) = uridine(17) in tRNA + NADH + H(+). The enzyme catalyses 5,6-dihydrouridine(17) in tRNA + NADP(+) = uridine(17) in tRNA + NADPH + H(+). Catalyzes the synthesis of dihydrouridine, a modified base found in the D-loop of most tRNAs. Specifically modifies U16 and U17 in cytoplasmic tRNAs. Affects the level of some mature tRNA and thereby the total cellular translation. The polypeptide is tRNA-dihydrouridine(16/17) synthase [NAD(P)(+)]-like (Dus1l) (Rattus norvegicus (Rat)).